The chain runs to 624 residues: Chaperone protein HtpG (624 aa).

The segment at 1 to 336 (MKGQETRGFQ…SNDLPLNVSR (336 aa)) is a; substrate-binding. Residues 337–552 (EILQDSTVTR…ADEMSTQMAK (216 aa)) are b. A c region spans residues 553 to 624 (LFAAAGQSVP…IRRMNQLLVS (72 aa)).

Belongs to the heat shock protein 90 family. Homodimer. UMPylated on a histidine residue by YdiU under ATP-limited conditions.

Its subcellular location is the cytoplasm. With respect to regulation, UMPylation of the chaperone by YdiU negatively regulates its activity, facilitating Salmonella survival under ATP-limited conditions. Its function is as follows. Molecular chaperone. Has ATPase activity. This is Chaperone protein HtpG from Salmonella typhimurium (strain LT2 / SGSC1412 / ATCC 700720).